The primary structure comprises 410 residues: Pyrophosphate--fructose 6-phosphate 1-phosphotransferase (410 aa).

Glycine 12 contributes to the diphosphate binding site. Position 121 (aspartate 121) interacts with Mg(2+). Substrate is bound by residues 149-151 (TID), 194-196 (MGR), glutamate 266, and 323-326 (YFSR). Aspartate 151 serves as the catalytic Proton acceptor.

Belongs to the phosphofructokinase type A (PFKA) family. PPi-dependent PFK group II subfamily. Clade 'P' sub-subfamily. As to quaternary structure, homodimer or homotetramer. Mg(2+) serves as cofactor.

It is found in the cytoplasm. The catalysed reaction is beta-D-fructose 6-phosphate + diphosphate = beta-D-fructose 1,6-bisphosphate + phosphate + H(+). It functions in the pathway carbohydrate degradation; glycolysis; D-glyceraldehyde 3-phosphate and glycerone phosphate from D-glucose: step 3/4. Non-allosteric. Its function is as follows. Catalyzes the phosphorylation of D-fructose 6-phosphate, the first committing step of glycolysis. Uses inorganic phosphate (PPi) as phosphoryl donor instead of ATP like common ATP-dependent phosphofructokinases (ATP-PFKs), which renders the reaction reversible, and can thus function both in glycolysis and gluconeogenesis. Consistently, PPi-PFK can replace the enzymes of both the forward (ATP-PFK) and reverse (fructose-bisphosphatase (FBPase)) reactions. This chain is Pyrophosphate--fructose 6-phosphate 1-phosphotransferase, found in Mastigamoeba balamuthi (Phreatamoeba balamuthi).